A 480-amino-acid chain; its full sequence is CASP8 and FADD-like apoptosis regulator (480 aa).

2 consecutive DED domains span residues Met-1–Lys-73 and Asp-92–Lys-170. The interaction with CASP8 stretch occupies residues Met-1 to Lys-195. The tract at residues Met-1 to Ser-227 is interaction with FADD. An interaction with CASP8 propeptide region spans residues Met-1–Tyr-305. A not proteolytically processed and involved in apoptosis inhibition region spans residues Met-1 to Arg-435. Positions Lys-192–Arg-435 are interaction with CASP3. An interaction with TRAF1 and TRAF2 region spans residues Lys-192–Thr-480. An interaction with CASP8 subunits p18 and p10 region spans residues Leu-217–Thr-480. Positions Glu-263–Gln-358 are caspase. The segment at Ser-370–Thr-480 is interaction with CASP8.

The protein belongs to the peptidase C14A family. As to quaternary structure, TNFRSF6 stimulation triggers recruitment to the death-inducing signaling complex (DISC) formed by TNFRSF6, FADD and CASP8. A proteolytic fragment (p43) stays associated with the DISC. Interacts with RIPK1. In terms of processing, proteolytically processed by CASP8 generating subunit p43 and p12.

Its function is as follows. Apoptosis regulator protein which may function as a crucial link between cell survival and cell death pathways in mammalian cells. Acts as an inhibitor of TNFRSF6 mediated apoptosis. A proteolytic fragment (p43) is likely retained in the death-inducing signaling complex (DISC) thereby blocking further recruitment and processing of caspase-8 at the complex. Full length and shorter isoforms have been shown either to induce apoptosis or to reduce TNFRSF-triggered apoptosis. Lacks enzymatic (caspase) activity. This Pongo abelii (Sumatran orangutan) protein is CASP8 and FADD-like apoptosis regulator (CFLAR).